The following is a 57-amino-acid chain: Small ribosomal subunit protein bS21 (57 aa).

Residues 24-57 (SKSGTLQESRKREFYEKPSVKRKKKSEAARKRKF) are disordered. The span at 31–42 (ESRKREFYEKPS) shows a compositional bias: basic and acidic residues. The segment covering 43 to 57 (VKRKKKSEAARKRKF) has biased composition (basic residues).

This sequence belongs to the bacterial ribosomal protein bS21 family.

The chain is Small ribosomal subunit protein bS21 (rpsU) from Listeria innocua serovar 6a (strain ATCC BAA-680 / CLIP 11262).